We begin with the raw amino-acid sequence, 457 residues long: Multidrug resistance protein MdtK (457 aa).

Helical transmembrane passes span 11–31 (LLAL…MGFV), 53–73 (IWLP…PVIA), 93–113 (WLAG…GYII), 127–147 (AVGY…FQVA), 160–180 (GMVM…IFIY), 189–209 (GGVG…LAMV), 243–263 (LPIA…ALLV), 276–296 (IALN…AAVT), 314–334 (AART…IFTV), 350–370 (VVTL…SDSI), 387–407 (IFYI…YILA), and 418–438 (PAGF…MMML).

Belongs to the multi antimicrobial extrusion (MATE) (TC 2.A.66.1) family. MdtK subfamily.

It localises to the cell inner membrane. Functionally, multidrug efflux pump that functions probably as a Na(+)/drug antiporter. This chain is Multidrug resistance protein MdtK, found in Escherichia coli (strain SE11).